We begin with the raw amino-acid sequence, 338 residues long: Ketol-acid reductoisomerase (NADP(+)) (338 aa).

The KARI N-terminal Rossmann domain maps to 1 to 181; the sequence is MQIFYDKDCD…GGGRTGIIET (181 aa). NADP(+) contacts are provided by residues 24-27, Arg47, Ser50, Ser52, and 82-85; these read YGSQ and DEFQ. His107 is an active-site residue. Gly133 is an NADP(+) binding site. Positions 182-327 constitute a KARI C-terminal knotted domain; the sequence is SFREETETDL…AKLRAMMPWI (146 aa). Mg(2+)-binding residues include Asp190, Glu194, Glu226, and Glu230. Ser251 lines the substrate pocket.

This sequence belongs to the ketol-acid reductoisomerase family. Requires Mg(2+) as cofactor.

The catalysed reaction is (2R)-2,3-dihydroxy-3-methylbutanoate + NADP(+) = (2S)-2-acetolactate + NADPH + H(+). The enzyme catalyses (2R,3R)-2,3-dihydroxy-3-methylpentanoate + NADP(+) = (S)-2-ethyl-2-hydroxy-3-oxobutanoate + NADPH + H(+). It participates in amino-acid biosynthesis; L-isoleucine biosynthesis; L-isoleucine from 2-oxobutanoate: step 2/4. It functions in the pathway amino-acid biosynthesis; L-valine biosynthesis; L-valine from pyruvate: step 2/4. In terms of biological role, involved in the biosynthesis of branched-chain amino acids (BCAA). Catalyzes an alkyl-migration followed by a ketol-acid reduction of (S)-2-acetolactate (S2AL) to yield (R)-2,3-dihydroxy-isovalerate. In the isomerase reaction, S2AL is rearranged via a Mg-dependent methyl migration to produce 3-hydroxy-3-methyl-2-ketobutyrate (HMKB). In the reductase reaction, this 2-ketoacid undergoes a metal-dependent reduction by NADPH to yield (R)-2,3-dihydroxy-isovalerate. The protein is Ketol-acid reductoisomerase (NADP(+)) of Acinetobacter baumannii (strain AB0057).